The following is a 930-amino-acid chain: Isoleucine--tRNA ligase (930 aa).

The 'HIGH' region signature appears at 57 to 67 (PYANGNIHVGH). Glu554 provides a ligand contact to L-isoleucyl-5'-AMP. A 'KMSKS' region motif is present at residues 595-599 (KMSKS). ATP is bound at residue Lys598. The Zn(2+) site is built by Cys888, Cys891, Cys908, and Cys911.

Belongs to the class-I aminoacyl-tRNA synthetase family. IleS type 1 subfamily. In terms of assembly, monomer. Requires Zn(2+) as cofactor.

Its subcellular location is the cytoplasm. The enzyme catalyses tRNA(Ile) + L-isoleucine + ATP = L-isoleucyl-tRNA(Ile) + AMP + diphosphate. In terms of biological role, catalyzes the attachment of isoleucine to tRNA(Ile). As IleRS can inadvertently accommodate and process structurally similar amino acids such as valine, to avoid such errors it has two additional distinct tRNA(Ile)-dependent editing activities. One activity is designated as 'pretransfer' editing and involves the hydrolysis of activated Val-AMP. The other activity is designated 'posttransfer' editing and involves deacylation of mischarged Val-tRNA(Ile). This Streptococcus pneumoniae (strain P1031) protein is Isoleucine--tRNA ligase.